Here is a 306-residue protein sequence, read N- to C-terminus: Ornithine carbamoyltransferase (306 aa).

Residues 53-56 (STRT), Gln80, Arg104, and 131-134 (HPCQ) each bind carbamoyl phosphate. Residues Asn162, Asp219, and 223-224 (SM) each bind L-ornithine. Carbamoyl phosphate-binding positions include 259–260 (CL) and Arg287.

Belongs to the aspartate/ornithine carbamoyltransferase superfamily. OTCase family.

The protein localises to the cytoplasm. It catalyses the reaction carbamoyl phosphate + L-ornithine = L-citrulline + phosphate + H(+). It functions in the pathway amino-acid biosynthesis; L-arginine biosynthesis; L-arginine from L-ornithine and carbamoyl phosphate: step 1/3. In terms of biological role, reversibly catalyzes the transfer of the carbamoyl group from carbamoyl phosphate (CP) to the N(epsilon) atom of ornithine (ORN) to produce L-citrulline. This chain is Ornithine carbamoyltransferase, found in Psychrobacter sp. (strain PRwf-1).